The sequence spans 867 residues: Valine--tRNA ligase (867 aa).

Positions Pro-42–His-52 match the 'HIGH' region motif. The 'KMSKS' region signature appears at Lys-521–Ser-525. ATP is bound at residue Lys-524. Positions Leu-794–Ala-867 form a coiled coil.

It belongs to the class-I aminoacyl-tRNA synthetase family. ValS type 1 subfamily. As to quaternary structure, monomer.

The protein resides in the cytoplasm. It carries out the reaction tRNA(Val) + L-valine + ATP = L-valyl-tRNA(Val) + AMP + diphosphate. Its function is as follows. Catalyzes the attachment of valine to tRNA(Val). As ValRS can inadvertently accommodate and process structurally similar amino acids such as threonine, to avoid such errors, it has a 'posttransfer' editing activity that hydrolyzes mischarged Thr-tRNA(Val) in a tRNA-dependent manner. The protein is Valine--tRNA ligase of Fervidobacterium nodosum (strain ATCC 35602 / DSM 5306 / Rt17-B1).